Here is a 151-residue protein sequence, read N- to C-terminus: Thymosin beta (151 aa).

4 repeat units span residues 24-29 (LKKVET), 62-67 (LHSTPV), 100-105 (LKKTET), and 134-139 (LHHVET). The 4 X 6 AA repeat of L-[KH]-[KSH]-[VT]-[EP]-[TV] stretch occupies residues 24-139 (LKKVETTEKN…DKSALHHVET (116 aa)).

The protein belongs to the thymosin beta family. As to quaternary structure, interacts (via repeats 1, 2 and 4) with G-actin in a 1:3 ratio. Interacts (via repeats 2 and 3) with F-actin. In terms of tissue distribution, at the comma stage, enriched in the developing nerve ring (at protein level). Ubiquitously expressed in larvae and adults with enrichment in the spermatheca, the intestinal tract and the posterior bulb of the pharynx (at protein level). Expressed in oocytes and in the gonad (at protein level).

The protein localises to the cytoplasm. The protein resides in the cell cortex. It is found in the cell junction. It localises to the cytoskeleton. Functionally, plays an important role in the organization of the cytoskeleton by regulating actin polymerization in two ways. Firstly, by binding to and sequestering actin monomers (G actin) inhibits actin polymerization. Secondly, by binding directly filamentous actin (F actin) promotes actin polymerization. Regulates the formation of cortical actin in oocytes conferring them enough rigidity to sustain the contractions during ovulation. This chain is Thymosin beta, found in Caenorhabditis elegans.